A 410-amino-acid chain; its full sequence is Tegument protein VP16 homolog (410 aa).

Residues 388–410 (PPSPSEILPGDPPRPPTCGFLTR) are disordered.

The protein belongs to the herpesviridae tegument protein VP16 protein family. Associates with the VP16-induced complex; binding to host HCFC1 activates VP16 for association with the octamer motif-binding host protein POU2F1, to form a multiprotein-DNA complex responsible for activating transcription of the viral immediate early genes.

It is found in the virion tegument. Its subcellular location is the host nucleus. Its function is as follows. Transcriptional activator of immediate-early (IE) gene products (alpha genes). Acts as a key activator of lytic infection by initiating the lytic program through the assembly of the transcriptional regulatory VP16-induced complex composed of VP16 and two cellular factors, HCFC1 and POU2F1. VP16-induced complex represents a regulatory switch: when it is on, it promotes IE-gene expression and thus lytic infection, and when it is off, it limits IE-gene transcription favoring latent infection. Functionally, may play a role in the aggregation of tegument proteins around nucleocapsids during virus morphogenesis. This is Tegument protein VP16 homolog from Varicella-zoster virus (strain Dumas) (HHV-3).